Reading from the N-terminus, the 204-residue chain is Auxin-binding protein 4 (204 aa).

Residues 1 to 41 form the signal peptide; sequence MVRRRPATGAAPRPHLAAVGRGLLLASVLAAAASSLPVAES. The cysteines at positions 43 and 196 are disulfide-linked. The Zn(2+) site is built by His98, His100, and Glu104. N-linked (GlcNAc...) asparagine glycosylation is present at Asn136. Position 147 (His147) interacts with Zn(2+). A Prevents secretion from ER motif is present at residues 201–204; that stretch reads KDEL.

As to quaternary structure, homodimer.

It is found in the endoplasmic reticulum lumen. This is probably a receptor for the plant hormone auxin. This chain is Auxin-binding protein 4 (ABP4), found in Zea mays (Maize).